Reading from the N-terminus, the 199-residue chain is Inner membrane protein E199L (199 aa).

N-linked (GlcNAc...) asparagine; by host glycosylation is present at Asn-131. A helical membrane pass occupies residues 150–170 (INVMNHPFLTLILIILILVII).

The protein belongs to the asfivirus E199L family. In terms of assembly, interacts with host PYCR2; this interaction results in autophagy activation.

The protein localises to the virion membrane. It is found in the host membrane. Functionally, essential for viral fusion with host endosomal membrane and core release. Not required for virus morphogenesis and egress. Induces complete autophagy through the interaction with and down-regulation of host PYCR2. The sequence is that of Inner membrane protein E199L from African swine fever virus (isolate Pig/Kenya/KEN-50/1950) (ASFV).